A 328-amino-acid polypeptide reads, in one-letter code: C-type lectin domain family 4 member K (328 aa).

The Cytoplasmic segment spans residues 1–43 (MTVEKEAPDAHFTVDKQNISLWPREPPPKSGPSLVPGKTPTVR). Residues 44 to 64 (AALICLTLVLVASVLLQAVLY) form a helical; Signal-anchor for type II membrane protein membrane-spanning segment. The Extracellular segment spans residues 65 to 328 (PRFMGTISDV…CKRPYVPSEP (264 aa)). Asn-87, Asn-113, and Asn-180 each carry an N-linked (GlcNAc...) asparagine glycan. A coiled-coil region spans residues 145–190 (EEVSTLNAQIPELKSDLEKASALNTKIRALQGSLENMSKLLKRQND). Residues 202-320 (FKGNFYYFSL…CDKTFLFICK (119 aa)) enclose the C-type lectin domain. Disulfide bonds link Cys-223–Cys-319 and Cys-295–Cys-311.

As to quaternary structure, homotrimer. In terms of tissue distribution, exclusively expressed by Langerhans cells. Expressed in astrocytoma and malignant ependymoma, but not in normal brain tissues.

Its subcellular location is the membrane. In terms of biological role, calcium-dependent lectin displaying mannose-binding specificity. Induces the formation of Birbeck granules (BGs); is a potent regulator of membrane superimposition and zippering. Binds to sulfated as well as mannosylated glycans, keratan sulfate (KS) and beta-glucans. Facilitates uptake of antigens and is involved in the routing and/or processing of antigen for presentation to T cells. Major receptor on primary Langerhans cells for Candida species, Saccharomyces species, and Malassezia furfur. Protects against human immunodeficiency virus-1 (HIV-1) infection. Binds to high-mannose structures present on the envelope glycoprotein which is followed by subsequent targeting of the virus to the Birbeck granules leading to its rapid degradation. The sequence is that of C-type lectin domain family 4 member K (CD207) from Homo sapiens (Human).